Reading from the N-terminus, the 124-residue chain is LOB domain-containing protein 9 (124 aa).

An LOB domain is found at 11–113 (APCALCTTKN…IYLNELKEKI (103 aa)).

This sequence belongs to the LOB domain-containing protein family.

This chain is LOB domain-containing protein 9 (LBD9), found in Arabidopsis thaliana (Mouse-ear cress).